Reading from the N-terminus, the 313-residue chain is Fe-S cluster assembly protein dre2 (313 aa).

Disordered regions lie at residues 1–25 and 151–187; these read MSITIDTSVDIDLPTPPQSNGSQKR and GRKKKDKTNGVNGVQNGVATNGASTNGVGMFDPAQNN. The segment at 20–145 is N-terminal SAM-like domain; that stretch reads NGSQKRNLLL…FEKPVQEAAV (126 aa). A linker region spans residues 146–203; that stretch reads PLKLGGRKKKDKTNGVNGVQNGVATNGASTNGVGMFDPAQNNDDELIDEDALLSDDDL. A compositionally biased stretch (polar residues) spans 159–177; it reads NGVNGVQNGVATNGASTNG. [2Fe-2S] cluster is bound by residues Cys-213, Cys-225, Cys-228, and Cys-230. Residues 213–230 form a fe-S binding site A region; that stretch reads CVPETAKKRRRPCKDCTC. 4 residues coordinate [4Fe-4S] cluster: Cys-276, Cys-279, Cys-287, and Cys-290. 2 consecutive short sequence motifs (cx2C motif) follow at residues 276–279 and 287–290; these read CNSC and CSSC. Residues 276–290 form a fe-S binding site B region; that stretch reads CNSCSLGDAFRCSSC.

Belongs to the anamorsin family. In terms of assembly, monomer. Interacts with tah18. Interacts with mia40. [2Fe-2S] cluster is required as a cofactor. Requires [4Fe-4S] cluster as cofactor.

The protein resides in the cytoplasm. It localises to the mitochondrion intermembrane space. Functionally, component of the cytosolic iron-sulfur (Fe-S) protein assembly (CIA) machinery required for the maturation of extramitochondrial Fe-S proteins. Part of an electron transfer chain functioning in an early step of cytosolic Fe-S biogenesis, facilitating the de novo assembly of a [4Fe-4S] cluster on the scaffold complex cfd1-nbp35. Electrons are transferred to dre2 from NADPH via the FAD- and FMN-containing protein tah18. Tah18-dre2 are also required for the assembly of the diferric tyrosyl radical cofactor of ribonucleotide reductase (RNR), probably by providing electrons for reduction during radical cofactor maturation in the catalytic small subunit rnr2. In Aspergillus oryzae (strain ATCC 42149 / RIB 40) (Yellow koji mold), this protein is Fe-S cluster assembly protein dre2.